The sequence spans 545 residues: Chaperonin GroEL (545 aa).

ATP contacts are provided by residues 30–33 (TLGP), lysine 51, 87–91 (DGTTT), glycine 415, and aspartate 495.

The protein belongs to the chaperonin (HSP60) family. In terms of assembly, forms a cylinder of 14 subunits composed of two heptameric rings stacked back-to-back. Interacts with the co-chaperonin GroES.

It is found in the cytoplasm. The enzyme catalyses ATP + H2O + a folded polypeptide = ADP + phosphate + an unfolded polypeptide.. Its function is as follows. Together with its co-chaperonin GroES, plays an essential role in assisting protein folding. The GroEL-GroES system forms a nano-cage that allows encapsulation of the non-native substrate proteins and provides a physical environment optimized to promote and accelerate protein folding. The chain is Chaperonin GroEL from Shewanella sp. (strain W3-18-1).